The following is a 297-amino-acid chain: 4-hydroxybenzoate octaprenyltransferase (297 aa).

9 consecutive transmembrane segments (helical) span residues 29 to 49 (IGTY…AEGV), 55 to 75 (LFIF…VNDF), 102 to 122 (AWTL…LTNA), 124 to 141 (TVYL…YPFM), 146 to 166 (FYPQ…AFTA), 169 to 189 (GSLP…TVAY), 219 to 239 (VIIV…GVRF), 241 to 261 (LGQW…WEFW), and 270 to 290 (VCFK…AGIV).

It belongs to the UbiA prenyltransferase family. The cofactor is Mg(2+).

It is found in the cell inner membrane. It catalyses the reaction all-trans-octaprenyl diphosphate + 4-hydroxybenzoate = 4-hydroxy-3-(all-trans-octaprenyl)benzoate + diphosphate. It functions in the pathway cofactor biosynthesis; ubiquinone biosynthesis. Functionally, catalyzes the prenylation of para-hydroxybenzoate (PHB) with an all-trans polyprenyl group. Mediates the second step in the final reaction sequence of ubiquinone-8 (UQ-8) biosynthesis, which is the condensation of the polyisoprenoid side chain with PHB, generating the first membrane-bound Q intermediate 3-octaprenyl-4-hydroxybenzoate. In Stutzerimonas stutzeri (strain A1501) (Pseudomonas stutzeri), this protein is 4-hydroxybenzoate octaprenyltransferase.